Consider the following 344-residue polypeptide: L-rhamnose-proton symporter (344 aa).

10 helical membrane passes run 4–24, 38–58, 68–88, 101–121, 137–157, 175–195, 214–234, 259–279, 290–310, and 321–341; these read AITMGIFWHLIGAASAACFYA, WSVGGIVSWLILPWAISALLL, FNLSTLLPVFLFGAMWGIGNI, MGIGIAIGITLIVGTLMTPII, TLLGVFVALIGVGIVTRAGQL, LLLAVMCGIFSAGMSFAMNAA, LPSYVVIMGGGALVNLGFCFI, ILLSALGGLMWYLQFFFYAWG, MSWMLHMSFYVLCGGLVGLVL, and VAVLSLGCVVIIIAANIVGLG.

It belongs to the L-rhamnose transporter (TC 2.A.7.6) family.

The protein localises to the cell inner membrane. The enzyme catalyses L-rhamnopyranose(in) + H(+)(in) = L-rhamnopyranose(out) + H(+)(out). Functionally, uptake of L-rhamnose across the cytoplasmic membrane with the concomitant transport of protons into the cell (symport system). The sequence is that of L-rhamnose-proton symporter from Salmonella gallinarum (strain 287/91 / NCTC 13346).